Here is a 484-residue protein sequence, read N- to C-terminus: Bifunctional protein HldE (484 aa).

The ribokinase stretch occupies residues 1 to 320; sequence MDFSSITVLC…AELNAQDADA (320 aa). 195-198 is an ATP binding site; sequence NARE. Asp-265 is a catalytic residue. A cytidylyltransferase region spans residues 349–484; it reads FTNGCFDIIH…RIRAAGAADR (136 aa).

It in the N-terminal section; belongs to the carbohydrate kinase PfkB family. The protein in the C-terminal section; belongs to the cytidylyltransferase family. In terms of assembly, homodimer.

The catalysed reaction is D-glycero-beta-D-manno-heptose 7-phosphate + ATP = D-glycero-beta-D-manno-heptose 1,7-bisphosphate + ADP + H(+). It catalyses the reaction D-glycero-beta-D-manno-heptose 1-phosphate + ATP + H(+) = ADP-D-glycero-beta-D-manno-heptose + diphosphate. Its pathway is nucleotide-sugar biosynthesis; ADP-L-glycero-beta-D-manno-heptose biosynthesis; ADP-L-glycero-beta-D-manno-heptose from D-glycero-beta-D-manno-heptose 7-phosphate: step 1/4. The protein operates within nucleotide-sugar biosynthesis; ADP-L-glycero-beta-D-manno-heptose biosynthesis; ADP-L-glycero-beta-D-manno-heptose from D-glycero-beta-D-manno-heptose 7-phosphate: step 3/4. Catalyzes the phosphorylation of D-glycero-D-manno-heptose 7-phosphate at the C-1 position to selectively form D-glycero-beta-D-manno-heptose-1,7-bisphosphate. In terms of biological role, catalyzes the ADP transfer from ATP to D-glycero-beta-D-manno-heptose 1-phosphate, yielding ADP-D-glycero-beta-D-manno-heptose. This is Bifunctional protein HldE from Gluconacetobacter diazotrophicus (strain ATCC 49037 / DSM 5601 / CCUG 37298 / CIP 103539 / LMG 7603 / PAl5).